The sequence spans 352 residues: Cell division protein ZipA (352 aa).

Over Met1–Leu6 the chain is Periplasmic. The chain crosses the membrane as a helical span at residues Val7–Ile27. Over Arg28–Ala352 the chain is Cytoplasmic. Disordered stretches follow at residues Lys78–Pro120 and Pro138–Ala160. Residues Thr83–Leu105 are compositionally biased toward polar residues. Residues His111–Pro120 show a composition bias toward basic and acidic residues. Positions Thr141–Ala160 are enriched in polar residues.

This sequence belongs to the ZipA family. Interacts with FtsZ via their C-terminal domains.

Its subcellular location is the cell inner membrane. Functionally, essential cell division protein that stabilizes the FtsZ protofilaments by cross-linking them and that serves as a cytoplasmic membrane anchor for the Z ring. Also required for the recruitment to the septal ring of downstream cell division proteins. The sequence is that of Cell division protein ZipA from Shewanella frigidimarina (strain NCIMB 400).